A 183-amino-acid polypeptide reads, in one-letter code: ATP synthase subunit b, chloroplastic (183 aa).

The chain crosses the membrane as a helical span at residues 28–48 (DIFEANVINILLLLFGLIYVL).

Belongs to the ATPase B chain family. In terms of assembly, F-type ATPases have 2 components, F(1) - the catalytic core - and F(0) - the membrane proton channel. F(1) has five subunits: alpha(3), beta(3), gamma(1), delta(1), epsilon(1). F(0) has four main subunits: a(1), b(1), b'(1) and c(10-14). The alpha and beta chains form an alternating ring which encloses part of the gamma chain. F(1) is attached to F(0) by a central stalk formed by the gamma and epsilon chains, while a peripheral stalk is formed by the delta, b and b' chains.

It is found in the plastid. Its subcellular location is the chloroplast thylakoid membrane. Functionally, f(1)F(0) ATP synthase produces ATP from ADP in the presence of a proton or sodium gradient. F-type ATPases consist of two structural domains, F(1) containing the extramembraneous catalytic core and F(0) containing the membrane proton channel, linked together by a central stalk and a peripheral stalk. During catalysis, ATP synthesis in the catalytic domain of F(1) is coupled via a rotary mechanism of the central stalk subunits to proton translocation. Component of the F(0) channel, it forms part of the peripheral stalk, linking F(1) to F(0). The chain is ATP synthase subunit b, chloroplastic from Porphyra purpurea (Red seaweed).